A 475-amino-acid polypeptide reads, in one-letter code: Aspartyl/glutamyl-tRNA(Asn/Gln) amidotransferase subunit B (475 aa).

The protein belongs to the GatB/GatE family. GatB subfamily. Heterotrimer of A, B and C subunits.

The catalysed reaction is L-glutamyl-tRNA(Gln) + L-glutamine + ATP + H2O = L-glutaminyl-tRNA(Gln) + L-glutamate + ADP + phosphate + H(+). The enzyme catalyses L-aspartyl-tRNA(Asn) + L-glutamine + ATP + H2O = L-asparaginyl-tRNA(Asn) + L-glutamate + ADP + phosphate + 2 H(+). In terms of biological role, allows the formation of correctly charged Asn-tRNA(Asn) or Gln-tRNA(Gln) through the transamidation of misacylated Asp-tRNA(Asn) or Glu-tRNA(Gln) in organisms which lack either or both of asparaginyl-tRNA or glutaminyl-tRNA synthetases. The reaction takes place in the presence of glutamine and ATP through an activated phospho-Asp-tRNA(Asn) or phospho-Glu-tRNA(Gln). This Chromobacterium violaceum (strain ATCC 12472 / DSM 30191 / JCM 1249 / CCUG 213 / NBRC 12614 / NCIMB 9131 / NCTC 9757 / MK) protein is Aspartyl/glutamyl-tRNA(Asn/Gln) amidotransferase subunit B.